Reading from the N-terminus, the 383-residue chain is 23S rRNA (uracil(747)-C(5))-methyltransferase RlmC (383 aa).

4 residues coordinate [4Fe-4S] cluster: Cys3, Cys11, Cys14, and Cys89. S-adenosyl-L-methionine-binding residues include Gln214, Phe243, Glu270, and Asn315. Cys342 (nucleophile) is an active-site residue.

It belongs to the class I-like SAM-binding methyltransferase superfamily. RNA M5U methyltransferase family. RlmC subfamily.

It carries out the reaction uridine(747) in 23S rRNA + S-adenosyl-L-methionine = 5-methyluridine(747) in 23S rRNA + S-adenosyl-L-homocysteine + H(+). Catalyzes the formation of 5-methyl-uridine at position 747 (m5U747) in 23S rRNA. The protein is 23S rRNA (uracil(747)-C(5))-methyltransferase RlmC of Actinobacillus succinogenes (strain ATCC 55618 / DSM 22257 / CCUG 43843 / 130Z).